We begin with the raw amino-acid sequence, 401 residues long: Argininosuccinate synthase (401 aa).

Position 9–17 (9–17) interacts with ATP; the sequence is AYSGGLDTS. Tyrosine 87 provides a ligand contact to L-citrulline. Position 117 (glycine 117) interacts with ATP. The L-aspartate site is built by threonine 119, asparagine 123, and aspartate 124. Residue asparagine 123 coordinates L-citrulline. L-citrulline contacts are provided by arginine 127, serine 176, serine 185, glutamate 261, and tyrosine 273.

It belongs to the argininosuccinate synthase family. Type 1 subfamily. As to quaternary structure, homotetramer.

Its subcellular location is the cytoplasm. It catalyses the reaction L-citrulline + L-aspartate + ATP = 2-(N(omega)-L-arginino)succinate + AMP + diphosphate + H(+). Its pathway is amino-acid biosynthesis; L-arginine biosynthesis; L-arginine from L-ornithine and carbamoyl phosphate: step 2/3. In Prosthecochloris aestuarii (strain DSM 271 / SK 413), this protein is Argininosuccinate synthase.